Reading from the N-terminus, the 148-residue chain is MTLTKHEQDILLKELGPHVDTPAHIVETGLGAYHALFTAHPQYIIHFSRLEGHTIENVMQSEGIKHYARTLTEAIVHMLKEISNDAEVKKIAAQYGKDHTSRKVTKDEFMSGEPIFTKYFQNLVKDAEGKAAVEKFLKHVFPMMAAEI.

The Globin domain maps to 2 to 148 (TLTKHEQDIL…HVFPMMAAEI (147 aa)). Heme is bound at residue H99.

Belongs to the globin family. As to quaternary structure, monomer.

Oxygen binding protein. The polypeptide is Globin-3 (Paramphistomum epiclitum).